The following is a 727-amino-acid chain: ADP-ribosylation factor-binding protein GGA3 (727 aa).

Residues 16-146 (ATNPSNRQED…MLKRQGIVQS (131 aa)) enclose the VHS domain. Residues serine 159 and serine 275 each carry the phosphoserine modification. In terms of domain architecture, GAT spans 171–298 (DEEKSKLLAK…VINSYKTIIE (128 aa)). Residues 299–597 (GQIINGEVTT…VHVPLESIKP (299 aa)) are unstructured hinge. Residues 334–385 (TPSSSSPVLAPAPAPPTSGIPILPPPPQTSGPPRSRSSSQAEAPSGPDSTNN) are disordered. Residues 343–363 (APAPAPPTSGIPILPPPPQTS) show a composition bias toward pro residues. The segment covering 364–374 (GPPRSRSSSQA) has biased composition (low complexity). The DXXLL signature appears at 391–395 (DEELL). The disordered stretch occupies residues 400 to 419 (SDPAPTAPKESAGNSPWHLF). The 122-residue stretch at 598 to 719 (SSALPVTAYD…TELGEVDQFP (122 aa)) folds into the GAE domain.

Belongs to the GGA protein family. In terms of assembly, monomer. Interacts with GGA1 and GGA2. Binds to clathrin and activated ARFs, such as ARF1, ARF5 and ARF6. Binds RABEP1 and RABGEF1. Interacts with the membrane proteins M6PR/CD-MPR and IGF2R/CI-MPR and the accessory proteins SYNRG, EPN4, NECAP1, NECAP2 and AFTPH/aftiphilin. Interacts with TSG101 and UBC. Interacts with ADRA2B. Interacts with NTRK1; the interaction is independent of NTRK1 activation and ubiquitination. Interacts (via VHS domain) with BACE1 (via DXXLL motif). In terms of processing, phosphorylated by CK2 and dephosphorylated by PP2A. Phosphorylation of GGA3 allows the internal DXXLL motif to bind the VHS domain and to inhibit the recognition of cargo signals. Ubiquitinated. Post-translationally, proteolytically cleaved during apoptosis by CASP3.

The protein localises to the golgi apparatus. It localises to the trans-Golgi network membrane. Its subcellular location is the endosome membrane. The protein resides in the early endosome membrane. It is found in the recycling endosome membrane. Plays a role in protein sorting and trafficking between the trans-Golgi network (TGN) and endosomes. Mediates the ARF-dependent recruitment of clathrin to the TGN and binds ubiquitinated proteins and membrane cargo molecules with a cytosolic acidic cluster-dileucine (DXXLL) motif. Mediates export of the GPCR receptor ADRA2B to the cell surface. Involved in BACE1 transport and sorting as well as regulation of BACE1 protein levels. Regulates retrograde transport of BACE1 from endosomes to the trans-Golgi network via interaction through the VHS motif and dependent of BACE1 phosphorylation. Modulates BACE1 protein levels independently of the interaction between VHS domain and DXXLL motif through recognition of ubiquitination. Key player in a novel DXXLL-mediated endosomal sorting machinery to the recycling pathway that targets NTRK1 to the plasma membrane. In Rattus norvegicus (Rat), this protein is ADP-ribosylation factor-binding protein GGA3.